We begin with the raw amino-acid sequence, 334 residues long: Heat-inducible transcription repressor HrcA (334 aa).

The protein belongs to the HrcA family.

Functionally, negative regulator of class I heat shock genes (grpE-dnaK-dnaJ and groELS operons). Prevents heat-shock induction of these operons. This Verminephrobacter eiseniae (strain EF01-2) protein is Heat-inducible transcription repressor HrcA.